The chain runs to 47 residues: Sperm protamine P1 (47 aa).

The protein belongs to the protamine P1 family. Testis.

Its subcellular location is the nucleus. It localises to the chromosome. Protamines substitute for histones in the chromatin of sperm during the haploid phase of spermatogenesis. They compact sperm DNA into a highly condensed, stable and inactive complex. The sequence is that of Sperm protamine P1 (PRM1) from Galeopterus variegatus (Malayan flying lemur).